We begin with the raw amino-acid sequence, 670 residues long: CLK4-associating serine/arginine rich protein (670 aa).

The residue at position 101 (Ser101) is a Phosphoserine. Disordered regions lie at residues 171-232 and 258-670; these read TVAE…GMAD and EKAM…HYRH. Residues 182–214 are compositionally biased toward acidic residues; the sequence is PEEEESPAEEESNSDEDEVIPDIDVEVDVDELN. A compositionally biased stretch (basic residues) spans 265-283; sequence RRSRRQRREFREKRLRGRK. Ser285 and Ser294 each carry phosphoserine. Positions 290–313 are enriched in basic and acidic residues; the sequence is ARRDSPTYDPYKRSPSESSSESRS. Thr327 carries the phosphothreonine modification. Phosphoserine occurs at positions 331 and 335. Residues 340 to 355 are compositionally biased toward low complexity; it reads AAAAAAAAASGAATGK. Over residues 356–365 the composition is skewed to pro residues; sequence PPAPPQPGGP. Residues 378–400 are compositionally biased toward low complexity; it reads STSSSSSSASRTSSSRSRSSSSS. Composition is skewed to basic residues over residues 411–443 and 481–491; these read SGRH…RRHS and RGGRGPRHHSS. Low complexity predominate over residues 492-529; sequence SRSSWSLSPSRSRSLTRSRSPSLSRSRSLSRSRSQSHS. Ser543 carries the post-translational modification Phosphoserine. Thr569 is modified (phosphothreonine). Positions 581 to 643 form a coiled coil; that stretch reads ALNRQFKADK…ERQYSRQSRS (63 aa). Composition is skewed to basic and acidic residues over residues 586 to 613 and 621 to 637; these read FKAD…ELRA and KERE…ERQY. Positions 638–647 are enriched in low complexity; sequence SRQSRSPSPR. Residues 655 to 670 are compositionally biased toward basic residues; it reads SRRRSRSRSRSPHYRH.

It belongs to the splicing factor SR family. In terms of assembly, probably interacts with CLK4. In terms of processing, phosphorylated in vitro by CLK4.

Its subcellular location is the nucleus. In terms of biological role, probably functions as an alternative splicing regulator. May regulate the mRNA splicing of genes such as CLK1. May act by regulating members of the CLK kinase family. This Bos taurus (Bovine) protein is CLK4-associating serine/arginine rich protein (CLASRP).